We begin with the raw amino-acid sequence, 168 residues long: Phosphopantetheine adenylyltransferase (168 aa).

A substrate-binding site is contributed by T14. Residues 14-15 (TF) and H22 each bind ATP. Substrate-binding residues include K46, L78, and R92. ATP is bound by residues 93–95 (GLR), E103, and 128–134 (YSFISSS).

This sequence belongs to the bacterial CoaD family. As to quaternary structure, homohexamer. The cofactor is Mg(2+).

The protein localises to the cytoplasm. It carries out the reaction (R)-4'-phosphopantetheine + ATP + H(+) = 3'-dephospho-CoA + diphosphate. The protein operates within cofactor biosynthesis; coenzyme A biosynthesis; CoA from (R)-pantothenate: step 4/5. Reversibly transfers an adenylyl group from ATP to 4'-phosphopantetheine, yielding dephospho-CoA (dPCoA) and pyrophosphate. This is Phosphopantetheine adenylyltransferase from Xanthomonas axonopodis pv. citri (strain 306).